The chain runs to 180 residues: Cytochrome b6-f complex subunit 4 (180 aa).

3 helical membrane-spanning segments follow: residues 36-56 (LSYIFPVVILGTIACTIGLAV), 95-115 (LLGVLLMGSVPAGSLTVPFLE), and 131-151 (TVSLIGTAVALWLGIGAALPI).

This sequence belongs to the cytochrome b family. PetD subfamily. In terms of assembly, the 4 large subunits of the cytochrome b6-f complex are cytochrome b6, subunit IV (17 kDa polypeptide, petD), cytochrome f and the Rieske protein, while the 4 small subunits are petG, petL, petM and petN. The complex functions as a dimer.

It is found in the plastid. The protein localises to the chloroplast thylakoid membrane. In terms of biological role, component of the cytochrome b6-f complex, which mediates electron transfer between photosystem II (PSII) and photosystem I (PSI), cyclic electron flow around PSI, and state transitions. This chain is Cytochrome b6-f complex subunit 4, found in Pinus thunbergii (Japanese black pine).